The chain runs to 104 residues: Large ribosomal subunit protein uL24 (104 aa).

It belongs to the universal ribosomal protein uL24 family. In terms of assembly, part of the 50S ribosomal subunit.

Functionally, one of two assembly initiator proteins, it binds directly to the 5'-end of the 23S rRNA, where it nucleates assembly of the 50S subunit. Its function is as follows. One of the proteins that surrounds the polypeptide exit tunnel on the outside of the subunit. This is Large ribosomal subunit protein uL24 from Clostridium botulinum (strain Alaska E43 / Type E3).